The chain runs to 254 residues: Type III pantothenate kinase (254 aa).

22–29 contributes to the ATP binding site; that stretch reads VLGNTHVR. Residues tyrosine 89 and 93–96 contribute to the substrate site; that span reads GLDR. Aspartate 95 functions as the Proton acceptor in the catalytic mechanism. Aspartate 115 contributes to the K(+) binding site. Threonine 118 is an ATP binding site. Substrate is bound at residue threonine 173.

The protein belongs to the type III pantothenate kinase family. In terms of assembly, homodimer. The cofactor is NH4(+). K(+) is required as a cofactor.

It localises to the cytoplasm. It catalyses the reaction (R)-pantothenate + ATP = (R)-4'-phosphopantothenate + ADP + H(+). Its pathway is cofactor biosynthesis; coenzyme A biosynthesis; CoA from (R)-pantothenate: step 1/5. Functionally, catalyzes the phosphorylation of pantothenate (Pan), the first step in CoA biosynthesis. The chain is Type III pantothenate kinase from Synechococcus sp. (strain JA-2-3B'a(2-13)) (Cyanobacteria bacterium Yellowstone B-Prime).